The primary structure comprises 396 residues: Ribosomal RNA large subunit methyltransferase I (396 aa).

Residues 2–81 (SVRLVLAKGR…ESIDIAFFSR (80 aa)) enclose the PUA domain.

Belongs to the methyltransferase superfamily. RlmI family.

It localises to the cytoplasm. It carries out the reaction cytidine(1962) in 23S rRNA + S-adenosyl-L-methionine = 5-methylcytidine(1962) in 23S rRNA + S-adenosyl-L-homocysteine + H(+). Functionally, specifically methylates the cytosine at position 1962 (m5C1962) of 23S rRNA. The protein is Ribosomal RNA large subunit methyltransferase I of Shigella boydii serotype 18 (strain CDC 3083-94 / BS512).